The following is a 98-amino-acid chain: NADH-ubiquinone oxidoreductase chain 4L (98 aa).

Helical transmembrane passes span 1 to 21, 29 to 49, and 58 to 78; these read MPIIYMNIMLAFLISLLGMLF, SLLCLEGMMLSLFIMSTLMAL, and IVPIALLVFAACEAAVGLALL.

Belongs to the complex I subunit 4L family. As to quaternary structure, core subunit of respiratory chain NADH dehydrogenase (Complex I) which is composed of 45 different subunits.

Its subcellular location is the mitochondrion inner membrane. The catalysed reaction is a ubiquinone + NADH + 5 H(+)(in) = a ubiquinol + NAD(+) + 4 H(+)(out). In terms of biological role, core subunit of the mitochondrial membrane respiratory chain NADH dehydrogenase (Complex I) which catalyzes electron transfer from NADH through the respiratory chain, using ubiquinone as an electron acceptor. Part of the enzyme membrane arm which is embedded in the lipid bilayer and involved in proton translocation. The sequence is that of NADH-ubiquinone oxidoreductase chain 4L (MT-ND4L) from Trachypithecus obscurus (Dusky leaf-monkey).